A 119-amino-acid polypeptide reads, in one-letter code: Beta-2-microglobulin (119 aa).

The first 20 residues, 1–20, serve as a signal peptide directing secretion; that stretch reads MARFVVVPLLVLVSLFGLEA. One can recognise an Ig-like C1-type domain in the interval 25-114; it reads PKIQVYSRYP…VTFSTPKTVK (90 aa). A disulfide bridge links Cys-45 with Cys-100.

Belongs to the beta-2-microglobulin family. In terms of assembly, heterodimer of an alpha chain and a beta chain. Beta-2-microglobulin is the beta-chain of major histocompatibility complex class I molecules.

It localises to the secreted. Its function is as follows. Component of the class I major histocompatibility complex (MHC). Involved in the presentation of peptide antigens to the immune system. This Saguinus oedipus (Cotton-top tamarin) protein is Beta-2-microglobulin (B2M).